The following is a 398-amino-acid chain: Cytochrome b (398 aa).

Residues 45–65 (LGSIAGIALVIQIITGVILAM) traverse the membrane as a helical segment. His-95 and His-109 together coordinate heme b. A run of 8 helical transmembrane segments spans residues 97-117 (VGAS…LYYG), 129-149 (IGII…VLPW), 164-184 (FSAI…GFSV), 192-212 (FFSL…LHLL), 245-265 (FVGF…EPNY), 304-324 (LAGV…PWLD), 335-355 (PIYR…GYLG), and 364-384 (IIIS…VLPL). Positions 196 and 210 each coordinate heme b.

The protein belongs to the cytochrome b family. The main subunits of complex b-c1 are: cytochrome b, cytochrome c1 and the Rieske protein. Heme b serves as cofactor.

It is found in the cell membrane. Functionally, component of the ubiquinol-cytochrome c reductase complex (complex III or cytochrome b-c1 complex), which is a respiratory chain that generates an electrochemical potential coupled to ATP synthesis. In Rickettsia typhi (strain ATCC VR-144 / Wilmington), this protein is Cytochrome b (petB).